The sequence spans 99 residues: Large ribosomal subunit protein P1 (99 aa).

As to quaternary structure, part of the 50S ribosomal subunit. Homodimer, it forms part of the ribosomal stalk which helps the ribosome interact with GTP-bound translation factors. Forms both a pentameric uL10/P0(P1)2(P1)2 and heptameric uL10/P0(P1)2(P1)2(P1)2 complex, where uL10/P0 forms an elongated spine to which the P1 dimers bind in a sequential fashion. The proportion of heptameric complexes increases during cell growth.

Its function is as follows. Forms part of the ribosomal stalk, playing a central role in the interaction of the ribosome with GTP-bound translation factors. The chain is Large ribosomal subunit protein P1 from Methanococcus vannielii.